Reading from the N-terminus, the 211-residue chain is Uracil phosphoribosyltransferase (211 aa).

5-phospho-alpha-D-ribose 1-diphosphate is bound by residues Arg78, Arg103, and 130–138; that span reads DPMLATGGT. Uracil-binding positions include Ile195 and 200-202; that span reads GDA. Residue Asp201 participates in 5-phospho-alpha-D-ribose 1-diphosphate binding.

This sequence belongs to the UPRTase family. Mg(2+) serves as cofactor.

It carries out the reaction UMP + diphosphate = 5-phospho-alpha-D-ribose 1-diphosphate + uracil. It functions in the pathway pyrimidine metabolism; UMP biosynthesis via salvage pathway; UMP from uracil: step 1/1. With respect to regulation, allosterically activated by GTP. Catalyzes the conversion of uracil and 5-phospho-alpha-D-ribose 1-diphosphate (PRPP) to UMP and diphosphate. This is Uracil phosphoribosyltransferase from Kocuria rhizophila (strain ATCC 9341 / DSM 348 / NBRC 103217 / DC2201).